The sequence spans 96 residues: Putative septation protein SpoVG (96 aa).

It belongs to the SpoVG family.

Functionally, could be involved in septation. In Oceanobacillus iheyensis (strain DSM 14371 / CIP 107618 / JCM 11309 / KCTC 3954 / HTE831), this protein is Putative septation protein SpoVG.